The following is a 232-amino-acid chain: MRLVVAQCTVNYVGRLTAHLPSAKRLLLIKADGSVSVHADDRAYKPLNWMSPPCWLTETEGEGGDDTSESGAPTVWVVENKAGEQLRITIESIEHDSAHELGVDPGLVKDGVEAHLQELLAEHVALLGDGYTLVRREYMTPIGPVDLLCRDADGATVAVEIKRRGEIDGVEQLTRYLELLNRDTTLAPVAGVFAAQQIKPQARTLAEDRGIRCLTLDYDAMRGMDSDEFRLF.

This sequence belongs to the NucS endonuclease family.

Its subcellular location is the cytoplasm. In terms of biological role, cleaves both 3' and 5' ssDNA extremities of branched DNA structures. This is Endonuclease NucS from Mycobacteroides abscessus (strain ATCC 19977 / DSM 44196 / CCUG 20993 / CIP 104536 / JCM 13569 / NCTC 13031 / TMC 1543 / L948) (Mycobacterium abscessus).